Here is a 676-residue protein sequence, read N- to C-terminus: Pre-mRNA-splicing factor CLF1 (676 aa).

16 HAT repeats span residues 46 to 78, 80 to 112, 114 to 146, 148 to 179, 181 to 212, 215 to 255, 257 to 291, 301 to 333, 336 to 369, 379 to 415, 417 to 449, 451 to 483, 485 to 519, 521 to 553, 576 to 614, and 620 to 652; these read EYQG…WELE, REFA…CELK, KNIN…TEET, GNIA…MEKR, REFD…FEME, NRDT…FETR, REYE…FEKQ, VVLT…LGQE, LEAD…LWIK, KEVE…FEIR, GNLP…LEAK, REFD…LEQM, GDEE…FEAE, ENYD…FEVT, EAKA…FEEE, and SKAD…YVFP. A compositionally biased stretch (basic and acidic residues) spans 616-628; sequence GDDKSKADLDKRK. Residues 616 to 636 form a disordered region; sequence GDDKSKADLDKRKPTPVKKKR.

It belongs to the crooked-neck family. As to quaternary structure, associated with the spliceosome.

Its subcellular location is the nucleus. In terms of biological role, involved in pre-mRNA splicing and cell cycle progression. Required for the spliceosome assembly and initiation of the DNA replication. This is Pre-mRNA-splicing factor CLF1 (CLF1) from Yarrowia lipolytica (strain CLIB 122 / E 150) (Yeast).